The following is a 556-amino-acid chain: Formate--tetrahydrofolate ligase (556 aa).

An ATP-binding site is contributed by 65-72; sequence TPAGEGKS.

This sequence belongs to the formate--tetrahydrofolate ligase family.

The enzyme catalyses (6S)-5,6,7,8-tetrahydrofolate + formate + ATP = (6R)-10-formyltetrahydrofolate + ADP + phosphate. It functions in the pathway one-carbon metabolism; tetrahydrofolate interconversion. This chain is Formate--tetrahydrofolate ligase, found in Streptococcus pneumoniae serotype 4 (strain ATCC BAA-334 / TIGR4).